A 293-amino-acid polypeptide reads, in one-letter code: MAVSASLVKELRERTGLGMMECKKALAETDGDIDAAIENLRKASGLKAAKKADRTAAEGVVAAKVADDGSYGVLVEVNSETDFVARDAGFLAFVDSVVEKAFSAKAADVAAVNDEAMESTRQALVQKIGENIGIRRVSLIEADGGLVGAYVHSNNRIAVMVQLANGGSVELAKDVAMHIAAVNPQVVNPEDMPEEVVNKEKDIIKAQPDMEGKPEQIVEKMMTGRINKFLKENSLVEQPFVKDPEITVGALVKKEGASVVSFSRFEVGEGIEKKEEDFAAEVAAQVAASKGNA.

An involved in Mg(2+) ion dislocation from EF-Tu region spans residues 81–84 (TDFV).

The protein belongs to the EF-Ts family.

The protein localises to the cytoplasm. Its function is as follows. Associates with the EF-Tu.GDP complex and induces the exchange of GDP to GTP. It remains bound to the aminoacyl-tRNA.EF-Tu.GTP complex up to the GTP hydrolysis stage on the ribosome. The chain is Elongation factor Ts from Teredinibacter turnerae (strain ATCC 39867 / T7901).